We begin with the raw amino-acid sequence, 94 residues long: Antifungal protein (94 aa).

An N-terminal signal peptide occupies residues 1 to 21; that stretch reads MKFVSLASLGFALVAALGAVA. Positions 22–43 are excised as a propeptide; the sequence is TPVEADSLTAGGLDARDESAVL. 4 disulfide bridges follow: cysteine 50–cysteine 76, cysteine 57–cysteine 83, cysteine 69–cysteine 71, and cysteine 92–cysteine 94.

The protein belongs to the antifungal protein pafB family.

It localises to the secreted. The protein resides in the host cytoplasm. Antifungal protein that acts as an inhibitor of growth of a variety of fungal species. This is Antifungal protein (afp) from Aspergillus giganteus.